The sequence spans 552 residues: DnaJ homolog subfamily C member 1 (552 aa).

A signal peptide spans 1–43 (MWVPGFGSARLPQRRRSGLESSSVRPLWLLLLFLLAAVRPVRA). Topologically, residues 44–149 (WESGDLELFD…RRVRKMSNAE (106 aa)) are lumenal. A J domain is found at 56–129 (EEVQLNFYEF…RYDDVLINGL (74 aa)). A helical transmembrane segment spans residues 150–170 (LALLLFIILTVGHYAVVWSIY). Over 171–552 (LEKQLDELLG…LVQKKKQAKS (382 aa)) the chain is Cytoplasmic. Residues 323–377 (RQAPEWTEEDLSQLTRSMVKFPGGTPGRWDKIAHELGRSVTDVTTKAKELKDSVT) enclose the SANT 1 domain. Residues 370-495 (KELKDSVTSS…ERTRAAEEAW (126 aa)) form a disordered region. Position 379 is a phosphoserine (serine 379). Residues 419 to 431 (MEDEEHEAAEGEQ) are compositionally biased toward acidic residues. Positions 453–470 (TRVEPEEKLRGKRQKDFD) are enriched in basic and acidic residues. A phosphoserine mark is found at serine 477 and serine 478. Residues 480–492 (EEKQRKERTRAAE) are compositionally biased toward basic and acidic residues. In terms of domain architecture, SANT 2 spans 490-545 (AAEEAWTQSQQKLLELALQQYPKGASDRWDKIAKCVPSKSKEDCIARYKLLVELVQ).

Interacts (via J domain) with HSPA5. Interacts (via cytosolic domain) with ribosomes. Interacts (via SANT 2 domain) with SERPINA3; the interaction delays the formation of the covalent inhibitory complex SERPINA3-chymotrypsin, but does not alter the catalytic activity of SERPINA3. Interacts (via SANT 2 domain) with ITIH4 (via C-terminus); the interaction protects ITIH4 against in vitro cleavage by kallikrein. Widely expressed.

Its subcellular location is the endoplasmic reticulum membrane. It is found in the nucleus membrane. The protein resides in the microsome membrane. Functionally, may modulate protein synthesis. This is DnaJ homolog subfamily C member 1 (Dnajc1) from Mus musculus (Mouse).